The following is a 320-amino-acid chain: Cytochrome f (320 aa).

The N-terminal stretch at 1–35 (MQTRNAFSCIKEGITRSISISVMIYIIIRAPFSNA) is a signal peptide. Heme is bound by residues tyrosine 36, cysteine 56, cysteine 59, and histidine 60. A helical transmembrane segment spans residues 286–306 (VQGLLFFLASIILAQIFLVLK).

Belongs to the cytochrome f family. The 4 large subunits of the cytochrome b6-f complex are cytochrome b6, subunit IV (17 kDa polypeptide, petD), cytochrome f and the Rieske protein, while the 4 small subunits are PetG, PetL, PetM and PetN. The complex functions as a dimer. It depends on heme as a cofactor.

The protein localises to the plastid. It localises to the chloroplast thylakoid membrane. Its function is as follows. Component of the cytochrome b6-f complex, which mediates electron transfer between photosystem II (PSII) and photosystem I (PSI), cyclic electron flow around PSI, and state transitions. This chain is Cytochrome f, found in Phaseolus vulgaris (Kidney bean).